Here is a 91-residue protein sequence, read N- to C-terminus: ATP synthase subunit c (91 aa).

Helical transmembrane passes span 4–24 and 53–73; these read FTMC…GTGI and IGLA…LIIL.

The protein belongs to the ATPase C chain family. In terms of assembly, F-type ATPases have 2 components, F(1) - the catalytic core - and F(0) - the membrane proton channel. F(1) has five subunits: alpha(3), beta(3), gamma(1), delta(1), epsilon(1). F(0) has three main subunits: a(1), b(2) and c(10-14). The alpha and beta chains form an alternating ring which encloses part of the gamma chain. F(1) is attached to F(0) by a central stalk formed by the gamma and epsilon chains, while a peripheral stalk is formed by the delta and b chains.

The protein localises to the cell inner membrane. Its function is as follows. F(1)F(0) ATP synthase produces ATP from ADP in the presence of a proton or sodium gradient. F-type ATPases consist of two structural domains, F(1) containing the extramembraneous catalytic core and F(0) containing the membrane proton channel, linked together by a central stalk and a peripheral stalk. During catalysis, ATP synthesis in the catalytic domain of F(1) is coupled via a rotary mechanism of the central stalk subunits to proton translocation. Key component of the F(0) channel; it plays a direct role in translocation across the membrane. A homomeric c-ring of between 10-14 subunits forms the central stalk rotor element with the F(1) delta and epsilon subunits. The chain is ATP synthase subunit c from Citrifermentans bemidjiense (strain ATCC BAA-1014 / DSM 16622 / JCM 12645 / Bem) (Geobacter bemidjiensis).